Here is a 430-residue protein sequence, read N- to C-terminus: Histidine--tRNA ligase (430 aa).

It belongs to the class-II aminoacyl-tRNA synthetase family. In terms of assembly, homodimer.

It is found in the cytoplasm. The enzyme catalyses tRNA(His) + L-histidine + ATP = L-histidyl-tRNA(His) + AMP + diphosphate + H(+). The polypeptide is Histidine--tRNA ligase (Chlorobium limicola (strain DSM 245 / NBRC 103803 / 6330)).